Here is a 395-residue protein sequence, read N- to C-terminus: Chaperone protein DnaJ (395 aa).

The J domain occupies 5–70 (DFYEVLGVDK…NKRAAYDRMG (66 aa)). A CR-type zinc finger spans residues 145-223 (GKDETIKVPT…CDGVGRVRKT (79 aa)). Zn(2+) is bound by residues cysteine 158, cysteine 161, cysteine 175, cysteine 178, cysteine 197, cysteine 200, cysteine 211, and cysteine 214. CXXCXGXG motif repeat units lie at residues 158-165 (CERCDGQG), 175-182 (CGTCQGAG), 197-204 (CPQCGGRG), and 211-218 (CNDCDGVG).

The protein belongs to the DnaJ family. As to quaternary structure, homodimer. It depends on Zn(2+) as a cofactor.

It is found in the cytoplasm. In terms of biological role, participates actively in the response to hyperosmotic and heat shock by preventing the aggregation of stress-denatured proteins and by disaggregating proteins, also in an autonomous, DnaK-independent fashion. Unfolded proteins bind initially to DnaJ; upon interaction with the DnaJ-bound protein, DnaK hydrolyzes its bound ATP, resulting in the formation of a stable complex. GrpE releases ADP from DnaK; ATP binding to DnaK triggers the release of the substrate protein, thus completing the reaction cycle. Several rounds of ATP-dependent interactions between DnaJ, DnaK and GrpE are required for fully efficient folding. Also involved, together with DnaK and GrpE, in the DNA replication of plasmids through activation of initiation proteins. The sequence is that of Chaperone protein DnaJ from Maricaulis maris (strain MCS10) (Caulobacter maris).